A 1026-amino-acid polypeptide reads, in one-letter code: Tyrosine-protein phosphatase 1 (1026 aa).

In terms of domain architecture, FERM spans 29 to 315 (IRCTVTFLDS…EQHTFFRLKT (287 aa)). 4 disordered regions span residues 376–396 (SIDS…LPSS), 430–456 (PLTT…SLRQ), 489–515 (GIHA…KSAN), and 584–616 (SFAS…DQVV). The segment covering 446-456 (DSESSAPSLRQ) has biased composition (polar residues). The span at 600-609 (SPQSNKSSSP) shows a compositional bias: low complexity. The region spanning 617-689 (TIKMRPDRHG…DHVVQFIRSA (73 aa)) is the PDZ domain. The 259-residue stretch at 753–1011 (VVDHFEMLYR…TFVCESILRA (259 aa)) folds into the Tyrosine-protein phosphatase domain. Residues D920, 952-958 (CSAGIGR), and Q996 contribute to the substrate site. The Phosphocysteine intermediate role is filled by C952.

It belongs to the protein-tyrosine phosphatase family. Non-receptor class subfamily.

The protein resides in the cytoplasm. It is found in the cytoskeleton. It catalyses the reaction O-phospho-L-tyrosyl-[protein] + H2O = L-tyrosyl-[protein] + phosphate. The protein is Tyrosine-protein phosphatase 1 (ptp-1) of Caenorhabditis elegans.